A 219-amino-acid chain; its full sequence is Uridylate kinase (219 aa).

An ATP-binding site is contributed by 9–10 (GS). UMP is bound at residue Gly-41. Gly-42 and Arg-46 together coordinate ATP. UMP-binding positions include Asp-63 and 110 to 116 (TFPGHTT). The ATP site is built by Thr-136, Asn-137, Tyr-142, and Asp-145.

It belongs to the UMP kinase family. In terms of assembly, homohexamer.

Its subcellular location is the cytoplasm. The enzyme catalyses UMP + ATP = UDP + ADP. Its pathway is pyrimidine metabolism; CTP biosynthesis via de novo pathway; UDP from UMP (UMPK route): step 1/1. Its activity is regulated as follows. Inhibited by UTP. Catalyzes the reversible phosphorylation of UMP to UDP. This chain is Uridylate kinase, found in Archaeoglobus fulgidus (strain ATCC 49558 / DSM 4304 / JCM 9628 / NBRC 100126 / VC-16).